Here is a 222-residue protein sequence, read N- to C-terminus: CEACAM1-like protein UL7 (222 aa).

N-linked (GlcNAc...) asparagine; by host glycans are attached at residues asparagine 50, asparagine 56, asparagine 60, asparagine 71, asparagine 105, asparagine 109, asparagine 125, asparagine 132, asparagine 147, asparagine 164, asparagine 168, and asparagine 189. The chain crosses the membrane as a helical span at residues 193–213 (LALVGVIVFIALIVVCIMGWW).

Belongs to the RL11 family. As to quaternary structure, interacts with host FLT3. Highly glycosylated.

The protein resides in the secreted. Its subcellular location is the host cell membrane. Its function is as follows. Plays a role in modulating the host immune response and affecting host cytokine production. Structurally and functionally homolog of host CEACAM1, induces endothelial cell angiogenesis. Ligands for host FLT3 receptor, activates the PI3K/AKT and MAPK/ERK pathways. In turn, triggers hematopoietic progenitor cell and monocyte differentiation leading to virus reactivation. This chain is CEACAM1-like protein UL7 (UL7), found in Human cytomegalovirus (strain AD169) (HHV-5).